We begin with the raw amino-acid sequence, 511 residues long: Coiled-coil domain-containing protein 125 (511 aa).

The span at Met1–Asp12 shows a compositional bias: polar residues. Positions Met1–Asn110 are disordered. Positions Glu43–Gly54 are enriched in basic and acidic residues. Over residues Gln83–Leu108 the composition is skewed to polar residues. 2 coiled-coil regions span residues Asn105 to Leu243 and Arg293 to Ala325. Phosphoserine is present on Ser504.

The protein localises to the cytoplasm. Its function is as follows. May be involved in the regulation of cell migration. The protein is Coiled-coil domain-containing protein 125 (CCDC125) of Homo sapiens (Human).